The following is a 118-amino-acid chain: UPF0342 protein Hore_03100 (118 aa).

It belongs to the UPF0342 family.

In Halothermothrix orenii (strain H 168 / OCM 544 / DSM 9562), this protein is UPF0342 protein Hore_03100.